The following is a 405-amino-acid chain: MVARWVKGSEDAPLALQKIPDLQSGPRSLRMEAIHIGMSSAPLVKHSNGVGLKAHRPRVMSKSGHSNVRIDKVDGIYLLYLQDLWTTVIDMKWRYKLTLFAATFVMTWFLFGVVYYAIAFIHGDLELGESNSNHTPCIMKVDSLTGAFLFSLESQTTIGYGVRSITEECPHAIFLLVAQLVITTLIEIFITGTFLAKIARPKKRAETIKFSHCAVISKQNGKLCLVIQVANMRKSLLIQCQLSGKLLQTHVTKEGERILLNQATVKFHVDSSSESPFLILPMTFYHVLDETSPLRDLTPQNLKEKEFELVVLLNATVESTSAVCQSRTSYIPEEIYWGFEFVPVVSLSKNGKYVADFSQFEQIRKSPDCTFYCADSEKQKLEEQYRQEDQRERELRSLLLQQSNV.

The Cytoplasmic segment spans residues 1–90 (MVARWVKGSE…LQDLWTTVID (90 aa)). A helical transmembrane segment spans residues 91–117 (MKWRYKLTLFAATFVMTWFLFGVVYYA). The Extracellular portion of the chain corresponds to 118 to 143 (IAFIHGDLELGESNSNHTPCIMKVDS). Positions 144–160 (LTGAFLFSLESQTTIGY) form an intramembrane region, helical; Pore-forming. The Selectivity filter motif lies at 157-162 (TIGYGV). Residues 161–169 (GVRSITEEC) are Extracellular-facing. The chain crosses the membrane as a helical span at residues 170-195 (PHAIFLLVAQLVITTLIEIFITGTFL). At 196–405 (AKIARPKKRA…RSLLLQQSNV (210 aa)) the chain is on the cytoplasmic side.

Belongs to the inward rectifier-type potassium channel (TC 1.A.2.1) family. KCNJ15 subfamily. Can form heteromultimeric channels with Kir5.1/KCNJ16. Interacts with PATJ.

The protein localises to the membrane. It is found in the cell membrane. It catalyses the reaction K(+)(in) = K(+)(out). Channel activity is regulated by variations of cytosolic pH; reversibly inhibited by acidic pH values. Inhibited by Ba(2+) and Cs(+) in a voltage-dependent manner. Functionally, inward rectifier potassium channels are characterized by a greater tendency to allow potassium to flow into the cell rather than out of it. Their voltage dependence is regulated by the concentration of extracellular potassium; as external potassium is raised, the voltage range of the channel opening shifts to more positive voltages. The inward rectification is mainly due to the blockage of outward current by internal magnesium. This chain is ATP-sensitive inward rectifier potassium channel 15 (Kcnj15), found in Rattus norvegicus (Rat).